We begin with the raw amino-acid sequence, 472 residues long: Coenzyme F(430) synthetase (472 aa).

119-125 (GVKAKTS) lines the ATP pocket.

The protein belongs to the MurCDEF family.

It carries out the reaction 15,17(3)-seco-F430-17(3)-acid + ATP = coenzyme F430 + ADP + phosphate. Involved in the biosynthesis of the unique nickel-containing tetrapyrrole coenzyme F430, the prosthetic group of methyl-coenzyme M reductase (MCR), which plays a key role in methanogenesis and anaerobic methane oxidation. Catalyzes the activation the g-propionate side chain of 15,17(3)-seco-F430-17(3)-acid (seco-F430) for intramolecular C-C bond formation to yield the carbocyclic F ring of coenzyme F430. This chain is Coenzyme F(430) synthetase, found in Methanosarcina acetivorans (strain ATCC 35395 / DSM 2834 / JCM 12185 / C2A).